A 264-amino-acid chain; its full sequence is 3-methyl-2-oxobutanoate hydroxymethyltransferase (264 aa).

Positions 45 and 84 each coordinate Mg(2+). 3-methyl-2-oxobutanoate contacts are provided by residues 45–46 (DS), Asp-84, and Lys-112. A Mg(2+)-binding site is contributed by Glu-114. Glu-181 acts as the Proton acceptor in catalysis.

The protein belongs to the PanB family. As to quaternary structure, homodecamer; pentamer of dimers. Requires Mg(2+) as cofactor.

The protein resides in the cytoplasm. It carries out the reaction 3-methyl-2-oxobutanoate + (6R)-5,10-methylene-5,6,7,8-tetrahydrofolate + H2O = 2-dehydropantoate + (6S)-5,6,7,8-tetrahydrofolate. It participates in cofactor biosynthesis; (R)-pantothenate biosynthesis; (R)-pantoate from 3-methyl-2-oxobutanoate: step 1/2. In terms of biological role, catalyzes the reversible reaction in which hydroxymethyl group from 5,10-methylenetetrahydrofolate is transferred onto alpha-ketoisovalerate to form ketopantoate. This chain is 3-methyl-2-oxobutanoate hydroxymethyltransferase, found in Edwardsiella ictaluri (strain 93-146).